The following is a 379-amino-acid chain: MAWGQGAKRSILGLLFRSQHQTARAYSSSAFQTHQLSTHVPQDGVFIRRFGSEVSSSEQMNLIKQLRQRTSAPIKDVKASLVTCNWDIEAAQKDLRKRGVALAAKKSSRTAAEGLLAIAQDDKRAAVVELNCETDFVARNDVFQYLASSLAKMALSAQGPGELFMPFGPELLENMPINLDHPKLSVETTVQSAVTEVAAMVGENVKLRRGFMLSTTAHGVVSSYMHTCPQPGMGRIAGLVTLETEDSSTLLDSVKSVGSSIAMHIVAAKPLFLSKELVSASALENEREILRTQAQSSGKSQMAMDKMVEGRLRKYFEEVVLMEQKYVLNDSTNIKTVLNDLSKEVGSKVTIGNFIRMEVGEGIERTEAADGLEVAGGAM.

The N-terminal 33 residues, 1–33 (MAWGQGAKRSILGLLFRSQHQTARAYSSSAFQT), are a transit peptide targeting the mitochondrion.

The protein belongs to the EF-Ts family.

It is found in the mitochondrion. In terms of biological role, associates with the EF-Tu.GDP complex and induces the exchange of GDP to GTP. It remains bound to the aminoacyl-tRNA.EF-Tu.GTP complex up to the GTP hydrolysis stage on the ribosome. The sequence is that of Elongation factor Ts, mitochondrial from Zea mays (Maize).